Here is a 359-residue protein sequence, read N- to C-terminus: DNA polymerase IV (359 aa).

In terms of domain architecture, UmuC spans isoleucine 7–glycine 188. Positions 11 and 106 each coordinate Mg(2+). The active site involves glutamate 107.

This sequence belongs to the DNA polymerase type-Y family. Monomer. Mg(2+) is required as a cofactor.

It localises to the cytoplasm. The enzyme catalyses DNA(n) + a 2'-deoxyribonucleoside 5'-triphosphate = DNA(n+1) + diphosphate. Its function is as follows. Poorly processive, error-prone DNA polymerase involved in untargeted mutagenesis. Copies undamaged DNA at stalled replication forks, which arise in vivo from mismatched or misaligned primer ends. These misaligned primers can be extended by PolIV. Exhibits no 3'-5' exonuclease (proofreading) activity. May be involved in translesional synthesis, in conjunction with the beta clamp from PolIII. The sequence is that of DNA polymerase IV from Clostridium perfringens (strain 13 / Type A).